A 102-amino-acid polypeptide reads, in one-letter code: Thioredoxin (102 aa).

The Thioredoxin domain occupies 1–102 (MVQIVSQDNF…SLVKLISKHQ (102 aa)). Cys28 and Cys31 are oxidised to a cystine.

The protein belongs to the thioredoxin family.

Its function is as follows. Participates in various redox reactions through the reversible oxidation of its active center dithiol to a disulfide and catalyzes dithiol-disulfide exchange reactions. The chain is Thioredoxin (trxA) from Chlamydia muridarum (strain MoPn / Nigg).